The following is a 764-amino-acid chain: 5-methyltetrahydropteroyltriglutamate--homocysteine methyltransferase (764 aa).

Residues 16–19 and Lys-112 each bind 5-methyltetrahydropteroyltri-L-glutamate; that span reads RELK. Residues 431 to 433 and Glu-484 contribute to the L-homocysteine site; that span reads IGS. Residues 431 to 433 and Glu-484 contribute to the L-methionine site; that span reads IGS. 5-methyltetrahydropteroyltri-L-glutamate is bound by residues 515 to 516 and Trp-561; that span reads RC. Asp-599 contributes to the L-homocysteine binding site. Asp-599 serves as a coordination point for L-methionine. Glu-605 lines the 5-methyltetrahydropteroyltri-L-glutamate pocket. His-641, Cys-643, and Glu-665 together coordinate Zn(2+). The Proton donor role is filled by His-694. Cys-726 is a Zn(2+) binding site.

Belongs to the vitamin-B12 independent methionine synthase family. The cofactor is Zn(2+).

The enzyme catalyses 5-methyltetrahydropteroyltri-L-glutamate + L-homocysteine = tetrahydropteroyltri-L-glutamate + L-methionine. Its pathway is amino-acid biosynthesis; L-methionine biosynthesis via de novo pathway; L-methionine from L-homocysteine (MetE route): step 1/1. Catalyzes the transfer of a methyl group from 5-methyltetrahydrofolate to homocysteine resulting in methionine formation. This chain is 5-methyltetrahydropteroyltriglutamate--homocysteine methyltransferase, found in Paraburkholderia phytofirmans (strain DSM 17436 / LMG 22146 / PsJN) (Burkholderia phytofirmans).